A 105-amino-acid chain; its full sequence is MTQSPFTLEANGLVLAVRLTPRASRTGLDGVRTEASGRPVLSLRVAAPPVEGAANAALTAFVAKSLGLRKAEVTLLSGETSRTKRLHLSGDPQMLAARVEAWLGG.

The protein belongs to the UPF0235 family.

The sequence is that of UPF0235 protein Mchl_2407 from Methylorubrum extorquens (strain CM4 / NCIMB 13688) (Methylobacterium extorquens).